The sequence spans 166 residues: Ribonuclease H (166 aa).

One can recognise an RNase H type-1 domain in the interval 5–147 (PRKRVALFTD…VDREARRQAQ (143 aa)). The Mg(2+) site is built by Asp-14, Glu-52, Asp-74, and Asp-139. The interval 128–166 (GHTGHPENERVDREARRQAQSQAKTPCPPRAPTLFHEEA) is disordered. A compositionally biased stretch (basic and acidic residues) spans 131-144 (GHPENERVDREARR).

The protein belongs to the RNase H family. In terms of assembly, monomer. The cofactor is Mg(2+).

The catalysed reaction is Endonucleolytic cleavage to 5'-phosphomonoester.. Functionally, endonuclease that specifically degrades the RNA of RNA-DNA hybrids. The protein is Ribonuclease H (rnhA) of Thermus thermophilus (strain ATCC 27634 / DSM 579 / HB8).